A 509-amino-acid polypeptide reads, in one-letter code: Activin receptor type-1 (509 aa).

A signal peptide spans 1-20; sequence MVDGVMILPVLVMIAFPFPS. Over 21–123 the chain is Extracellular; that stretch reads MEDEKPKVNP…FPGTQNFHLE (103 aa). Asn102 carries N-linked (GlcNAc...) asparagine glycosylation. Residues 124–146 traverse the membrane as a helical segment; that stretch reads VGLIILSVVFAVCLLACLLGVAL. Residues 147 to 509 are Cytoplasmic-facing; the sequence is RKFKRRNQER…NSLDKLKTDC (363 aa). One can recognise a GS domain in the interval 178 to 207; sequence STLADLLDHSCTSGSGSGLPFLVQRTVARQ. The 295-residue stretch at 208–502 folds into the Protein kinase domain; that stretch reads ITLLECVGKG…KTLTKIDNSL (295 aa). ATP is bound by residues 214 to 222 and Lys235; that span reads VGKGRYGEV. The active-site Proton acceptor is the Asp336. Position 501 is a phosphoserine (Ser501).

Belongs to the protein kinase superfamily. TKL Ser/Thr protein kinase family. TGFB receptor subfamily. In terms of assembly, interacts with FKBP1A. Interacts with FCHO1. Interacts with CLU. Interacts with type II receptors AMHR2 and ACVR2A. Interacts with BMP7. Interacts with BMP9. Interacts with BMP6 (when glycosylated); the interaction may induce HAMP expression. Interacts with TSC22D1/TSC-22. Mg(2+) serves as cofactor. Mn(2+) is required as a cofactor.

It is found in the membrane. The catalysed reaction is L-threonyl-[receptor-protein] + ATP = O-phospho-L-threonyl-[receptor-protein] + ADP + H(+). It carries out the reaction L-seryl-[receptor-protein] + ATP = O-phospho-L-seryl-[receptor-protein] + ADP + H(+). Functionally, bone morphogenetic protein (BMP) type I receptor that is involved in a wide variety of biological processes, including bone, heart, cartilage, nervous, and reproductive system development and regulation. As a type I receptor, forms heterotetrameric receptor complexes with the type II receptors AMHR2, ACVR2A ors ACVR2B. Upon binding of ligands such as BMP7 or BMP9 to the heteromeric complexes, type II receptors transphosphorylate ACVR1 intracellular domain. In turn, ACVR1 kinase domain is activated and subsequently phosphorylates SMAD1/5/8 proteins that transduce the signal. In addition to its role in mediating BMP pathway-specific signaling, suppresses TGFbeta/activin pathway signaling by interfering with the binding of activin to its type II receptor. Besides canonical SMAD signaling, can activate non-canonical signaling pathways. May promote the expression of HAMP, potentially via its interaction with BMP6. The protein is Activin receptor type-1 (ACVR1) of Bos taurus (Bovine).